The sequence spans 131 residues: uncharacterized protein (131 aa).

A helical membrane pass occupies residues 17–39 (VILLILILLPVVFLHIMLATWGL).

It is found in the membrane. This is an uncharacterized protein from Archaeoglobus fulgidus (strain ATCC 49558 / DSM 4304 / JCM 9628 / NBRC 100126 / VC-16).